Consider the following 442-residue polypeptide: 3-ketoacyl-CoA thiolase (442 aa).

C105 functions as the Acyl-thioester intermediate in the catalytic mechanism. Catalysis depends on proton acceptor residues H398 and C428.

It belongs to the thiolase-like superfamily. Thiolase family. Heterotetramer of two alpha chains (FadJ) and two beta chains (FadI).

The protein localises to the cytoplasm. It catalyses the reaction an acyl-CoA + acetyl-CoA = a 3-oxoacyl-CoA + CoA. The protein operates within lipid metabolism; fatty acid beta-oxidation. In terms of biological role, catalyzes the final step of fatty acid oxidation in which acetyl-CoA is released and the CoA ester of a fatty acid two carbons shorter is formed. In Aliivibrio fischeri (strain MJ11) (Vibrio fischeri), this protein is 3-ketoacyl-CoA thiolase.